The primary structure comprises 301 residues: tRNA dimethylallyltransferase (301 aa).

An ATP-binding site is contributed by 8 to 15; it reads GATGTGKS. 10–15 contributes to the substrate binding site; sequence TGTGKS. Residues 33 to 36 form an interaction with substrate tRNA region; it reads DSMQ.

The protein belongs to the IPP transferase family. Monomer. It depends on Mg(2+) as a cofactor.

It catalyses the reaction adenosine(37) in tRNA + dimethylallyl diphosphate = N(6)-dimethylallyladenosine(37) in tRNA + diphosphate. In terms of biological role, catalyzes the transfer of a dimethylallyl group onto the adenine at position 37 in tRNAs that read codons beginning with uridine, leading to the formation of N6-(dimethylallyl)adenosine (i(6)A). This is tRNA dimethylallyltransferase from Tropheryma whipplei (strain Twist) (Whipple's bacillus).